Here is a 206-residue protein sequence, read N- to C-terminus: KH domain-containing protein 3 (206 aa).

The involved in RNA binding stretch occupies residues 1–40 (MDTPRRFPTLVQLMQPKAMPVEVLGHLPKRFSWFHSEFLK). One can recognise a KH; atypical domain in the interval 40–103 (KNPKVVRLEV…SYQEDTIKMI (64 aa)). Over residues 144–153 (GTQRSVEVRE) the composition is skewed to basic and acidic residues. Residues 144-206 (GTQRSVEVRE…EDTRAPVTRL (63 aa)) form a disordered region. Threonine 145 is modified (phosphothreonine). Residues 166–183 (TGTQQSLEAANQSGTQRS) show a composition bias toward polar residues. Residue serine 171 is modified to Phosphoserine.

It belongs to the KHDC1 family. Component of the subcortical maternal complex (SCMC), at least composed of NLRP5, KHDC3L, OOEP, and TLE6. Within the complex, interacts with NLRP5, KHDC3L and TLE6. The SCMC may facilitate translocation of its components between the nuclear and cytoplasmic compartments. Forms a scaffold complex with OOEP/FLOPED, and interacts with BLM and TRIM25 at DNA replication forks. Interacts with PARP1; the interaction is increased following the formation of DNA double-strand breaks. Interacts with NUMA1.

It localises to the cytoplasm. It is found in the cell cortex. Its subcellular location is the nucleus. The protein resides in the mitochondrion. The protein localises to the cytoskeleton. It localises to the microtubule organizing center. It is found in the centrosome. Its subcellular location is the chromosome. Component of the subcortical maternal complex (SCMC), a multiprotein complex that plays a key role in early embryonic development. The SCMC complex is a structural constituent of cytoplasmic lattices, which consist in fibrous structures found in the cytoplasm of oocytes and preimplantation embryos. They are required to store maternal proteins critical for embryonic development, such as proteins that control epigenetic reprogramming of the preimplantation embryo, and prevent their degradation or activation. KHDC3 ensures proper spindle assembly by regulating the localization of AURKA via RHOA signaling and of PLK1 via a RHOA-independent process. Required for the localization of MAD2L1 to kinetochores to enable spindle assembly checkpoint function. As part of the OOEP-KHDC3 scaffold, recruits BLM and TRIM25 to DNA replication forks, thereby promoting the ubiquitination of BLM by TRIM25, enhancing BLM retainment at replication forks and therefore promoting stalled replication fork restart. Regulates homologous recombination-mediated DNA repair via recruitment of RAD51 to sites of DNA double-strand breaks, and sustainment of PARP1 activity, which in turn modulates downstream ATM or ATR activation. Activation of ATM or ATR in response to DNA double-strand breaks may be cell-type specific. Its role in DNA double-strand break repair is independent of its role in restarting stalled replication forks. Promotes neural stem cell neurogenesis and neuronal differentiation in the hippocampus. May regulate normal development of learning, memory and anxiety. Capable of binding RNA. This is KH domain-containing protein 3 (KHDC3L) from Macaca mulatta (Rhesus macaque).